We begin with the raw amino-acid sequence, 353 residues long: Photosystem II protein D1 (353 aa).

The residue at position 2 (Thr-2) is an N-acetylthreonine. Thr-2 is modified (phosphothreonine). 3 helical membrane passes run 29–46, 118–133, and 142–156; these read YIGWFGVLMIPTLLTATS, HFLLGVACYMGREWEL, and WIAVAYSAPVAAATA. A chlorophyll a-binding site is contributed by His-118. Pheophytin a is bound at residue Tyr-126. Positions 170 and 189 each coordinate [CaMn4O5] cluster. Residues 197–218 traverse the membrane as a helical segment; that stretch reads FHMLGVAGVFGGSLFSAMHGSL. His-198 is a binding site for chlorophyll a. A quinone contacts are provided by residues His-215 and 264-265; that span reads SF. Fe cation is bound at residue His-215. A Fe cation-binding site is contributed by His-272. The helical transmembrane segment at 274-288 threads the bilayer; that stretch reads FLAAWPVVGIWFTAL. Residues His-332, Glu-333, Asp-342, and Ala-344 each contribute to the [CaMn4O5] cluster site. A propeptide spanning residues 345–353 is cleaved from the precursor; that stretch reads AVEAPAVNG.

The protein belongs to the reaction center PufL/M/PsbA/D family. PSII is composed of 1 copy each of membrane proteins PsbA, PsbB, PsbC, PsbD, PsbE, PsbF, PsbH, PsbI, PsbJ, PsbK, PsbL, PsbM, PsbT, PsbX, PsbY, PsbZ, Psb30/Ycf12, at least 3 peripheral proteins of the oxygen-evolving complex and a large number of cofactors. It forms dimeric complexes. The D1/D2 heterodimer binds P680, chlorophylls that are the primary electron donor of PSII, and subsequent electron acceptors. It shares a non-heme iron and each subunit binds pheophytin, quinone, additional chlorophylls, carotenoids and lipids. D1 provides most of the ligands for the Mn4-Ca-O5 cluster of the oxygen-evolving complex (OEC). There is also a Cl(-1) ion associated with D1 and D2, which is required for oxygen evolution. The PSII complex binds additional chlorophylls, carotenoids and specific lipids. serves as cofactor. Tyr-161 forms a radical intermediate that is referred to as redox-active TyrZ, YZ or Y-Z. In terms of processing, C-terminally processed by CTPA; processing is essential to allow assembly of the oxygen-evolving complex and thus photosynthetic growth.

The protein localises to the plastid. The protein resides in the chloroplast thylakoid membrane. The catalysed reaction is 2 a plastoquinone + 4 hnu + 2 H2O = 2 a plastoquinol + O2. Photosystem II (PSII) is a light-driven water:plastoquinone oxidoreductase that uses light energy to abstract electrons from H(2)O, generating O(2) and a proton gradient subsequently used for ATP formation. It consists of a core antenna complex that captures photons, and an electron transfer chain that converts photonic excitation into a charge separation. The D1/D2 (PsbA/PsbD) reaction center heterodimer binds P680, the primary electron donor of PSII as well as several subsequent electron acceptors. This Conocephalum conicum (Snakeskin liverwort) protein is Photosystem II protein D1.